The primary structure comprises 344 residues: Holliday junction branch migration complex subunit RuvB (344 aa).

The segment at 1 to 183 is large ATPase domain (RuvB-L); the sequence is MPDRELISGD…FGLVLRLDPY (183 aa). ATP-binding positions include leucine 22, arginine 23, glycine 64, lysine 67, threonine 68, threonine 69, 130–132, arginine 173, tyrosine 183, and arginine 220; that span reads EDF. Threonine 68 contributes to the Mg(2+) binding site. The tract at residues 184–254 is small ATPAse domain (RuvB-S); the sequence is NTEELKAIVK…VAQTALNLLD (71 aa). Positions 257–344 are head domain (RuvB-H); it reads RYGLDEIDQK…EGDHPSLFEA (88 aa). Residues arginine 312 and arginine 317 each contribute to the DNA site.

The protein belongs to the RuvB family. Homohexamer. Forms an RuvA(8)-RuvB(12)-Holliday junction (HJ) complex. HJ DNA is sandwiched between 2 RuvA tetramers; dsDNA enters through RuvA and exits via RuvB. An RuvB hexamer assembles on each DNA strand where it exits the tetramer. Each RuvB hexamer is contacted by two RuvA subunits (via domain III) on 2 adjacent RuvB subunits; this complex drives branch migration. In the full resolvosome a probable DNA-RuvA(4)-RuvB(12)-RuvC(2) complex forms which resolves the HJ.

It localises to the cytoplasm. It catalyses the reaction ATP + H2O = ADP + phosphate + H(+). Its function is as follows. The RuvA-RuvB-RuvC complex processes Holliday junction (HJ) DNA during genetic recombination and DNA repair, while the RuvA-RuvB complex plays an important role in the rescue of blocked DNA replication forks via replication fork reversal (RFR). RuvA specifically binds to HJ cruciform DNA, conferring on it an open structure. The RuvB hexamer acts as an ATP-dependent pump, pulling dsDNA into and through the RuvAB complex. RuvB forms 2 homohexamers on either side of HJ DNA bound by 1 or 2 RuvA tetramers; 4 subunits per hexamer contact DNA at a time. Coordinated motions by a converter formed by DNA-disengaged RuvB subunits stimulates ATP hydrolysis and nucleotide exchange. Immobilization of the converter enables RuvB to convert the ATP-contained energy into a lever motion, pulling 2 nucleotides of DNA out of the RuvA tetramer per ATP hydrolyzed, thus driving DNA branch migration. The RuvB motors rotate together with the DNA substrate, which together with the progressing nucleotide cycle form the mechanistic basis for DNA recombination by continuous HJ branch migration. Branch migration allows RuvC to scan DNA until it finds its consensus sequence, where it cleaves and resolves cruciform DNA. This is Holliday junction branch migration complex subunit RuvB from Solibacter usitatus (strain Ellin6076).